An 846-amino-acid chain; its full sequence is Structure-specific endonuclease subunit SLX4 (846 aa).

7 disordered regions span residues 1-20, 84-111, 123-164, 283-322, 480-513, 624-690, and 723-751; these read MTDHGPDALDAFSPPRVGSA, KAGAENLPVHRTKRRKLGNQRDNTAESM, QPAE…VKKA, RTSKSLDSESLDTGTSSTSEGNGKRKQTKKAKRSAKSKIT, DPTPKITPKPGDERQSNLSNKNTERNIPEESSLL, PPNA…MGSQ, and TLASRSASSHITPQISSAPSQTVPIQTRA. The segment covering 141–153 has biased composition (basic and acidic residues); the sequence is KPSEKGQKSEKTA. Residues 293 to 303 show a composition bias toward polar residues; it reads LDTGTSSTSEG. A compositionally biased stretch (basic residues) spans 306–318; the sequence is KRKQTKKAKRSAK. Polar residues-rich tracts occupy residues 657–680 and 725–751; these read KEITNPARSSWSTAKNLKSSSKPT and ASRSASSHITPQISSAPSQTVPIQTRA.

The protein belongs to the SLX4 family. Forms a heterodimer with SLX1. In terms of processing, phosphorylated in response to DNA damage.

The protein localises to the nucleus. In terms of biological role, regulatory subunit of the SLX1-SLX4 structure-specific endonuclease that resolves DNA secondary structures generated during DNA repair and recombination. Has endonuclease activity towards branched DNA substrates, introducing single-strand cuts in duplex DNA close to junctions with ss-DNA. The polypeptide is Structure-specific endonuclease subunit SLX4 (Arthroderma otae (strain ATCC MYA-4605 / CBS 113480) (Microsporum canis)).